The following is a 260-amino-acid chain: ProSAAS (260 aa).

Positions 1–33 (MAGSPLLWGPRAGGVGLLVLLLLGLFRPPPALC) are cleaved as a signal peptide. Positions 34 to 215 (ARPVKEPRGL…SADSEGVAAP (182 aa)) are proSAAS(1-180). An O-linked (GalNAc...) threonine glycan is attached at Thr-53. A disordered region spans residues 165 to 188 (RPRPPVYDDGPAGPDAEEAGDETP). A compositionally biased stretch (acidic residues) spans 179–188 (DAEEAGDETP). The segment at 221–260 (AADHDVGSELPPEGVLGALLRVKRLETPAPQVPARRLLPP) is C-terminal inhibitory domain; interacts with PCSK1. Ser-228 is a glycosylation site (O-linked (GalNAc...) serine). Residues 239-244 (LLRVKR) carry the Sufficient for inhibition of PCSK1 motif. Thr-247 carries O-linked (GalNAc...) threonine glycosylation.

As to quaternary structure, interacts via the C-terminal inhibitory domain with PCSK1 66 kDa form. Post-translationally, proteolytically cleaved in the Golgi. In terms of processing, O-glycosylated with a core 1 or possibly core 8 glycan. Expressed in brain and pancreas.

The protein localises to the secreted. Its subcellular location is the golgi apparatus. It localises to the trans-Golgi network. Functionally, may function in the control of the neuroendocrine secretory pathway. Proposed be a specific endogenous inhibitor of PCSK1. ProSAAS and Big PEN-LEN, both containing the C-terminal inhibitory domain, but not the further processed peptides reduce PCSK1 activity in the endoplasmic reticulum and Golgi. It reduces the activity of the 84 kDa form but not the autocatalytically derived 66 kDa form of PCSK1. Subsequent processing of proSAAS may eliminate the inhibition. Slows down convertase-mediated processing of proopiomelanocortin and proenkephalin. May control the intracellular timing of PCSK1 rather than its total level of activity. In terms of biological role, endogenous ligand for GPR171. Neuropeptide involved in the regulation of feeding. The protein is ProSAAS (PCSK1N) of Homo sapiens (Human).